The sequence spans 462 residues: DNA polymerase delta subunit 3 (462 aa).

Alanine 2 bears the N-acetylalanine mark. Disordered stretches follow at residues 144 to 186 (APAE…ASQQ), 200 to 230 (TKTQDTNKETKPEAREVTSASSAGGKAPGKG), 254 to 384 (AVKE…RVLK), and 403 to 462 (SESC…FQKK). The span at 156–174 (QSNLQAASEAQASELTTNG) shows a compositional bias: polar residues. The segment covering 204-215 (DTNKETKPEARE) has biased composition (basic and acidic residues). Positions 218-230 (SASSAGGKAPGKG) are enriched in low complexity. A Glycyl lysine isopeptide (Lys-Gly) (interchain with G-Cter in SUMO); alternate cross-link involves residue lysine 256. Lysine 256 is covalently cross-linked (Glycyl lysine isopeptide (Lys-Gly) (interchain with G-Cter in SUMO2); alternate). Lysine 259 is covalently cross-linked (Glycyl lysine isopeptide (Lys-Gly) (interchain with G-Cter in SUMO2)). Positions 284–305 (RKSEPGKVQQKEKSSRGKRVDL) are enriched in basic and acidic residues. Serine 306 carries the phosphoserine modification. The segment covering 330-344 (SSEDEVFEDSPEMYE) has biased composition (acidic residues). The segment covering 348–368 (PSPPPVSPPPDPMPKTEPPPV) has biased composition (pro residues). A phosphoserine mark is found at serine 403 and serine 405. Residue threonine 407 is modified to Phosphothreonine. Serine 409 carries the post-translational modification Phosphoserine. Residues 416–427 (KPASAHKPPAAA) are compositionally biased toward low complexity. The segment covering 428 to 437 (VKREPREERK) has biased composition (basic and acidic residues). Residue lysine 429 forms a Glycyl lysine isopeptide (Lys-Gly) (interchain with G-Cter in SUMO); alternate linkage. A Glycyl lysine isopeptide (Lys-Gly) (interchain with G-Cter in SUMO2); alternate cross-link involves residue lysine 429. Over residues 451 to 462 (RQVSITGFFQKK) the composition is skewed to polar residues. Residues 452 to 459 (QVSITGFF) carry the PIP-box motif. Serine 454 is subject to Phosphoserine.

Component of both the DNA polymerase delta and DNA polymerase zeta complexes. The tetrameric DNA polymerase delta complex (Pol-delta4), which consists of POLD1/p125, POLD2/p50, POLD3/p66/p68 and POLD4/p12, with POLD1 bearing DNA polymerase and 3' to 5' proofreading exonuclease activities. Within this complex, directly interacts with POLD2. Following stress caused by DNA damaging agents or by replication stress, POLD4 is degraded and Pol-delta4 is converted into a trimeric form of the complex (Pol-delta3), which consists of POLD1, POLD2 and POLD3. Pol-delta3 is the major form occurring at S phase replication sites, as well as DNA damage sites. Directly interacts with PCNA, as do POLD1 and POLD4; this interaction stimulates Pol-delta polymerase activity. POLD3 phosphorylation at Ser-454 impairs PCNA binding. Component of the DNA polymerase zeta complex (POLZ), which consists of REV3L, MAD2L2, POLD2 and POLD3, with REV3L bearing DNA polymerase catalytic activity. The DNA polymerase delta complex interacts with POLDIP2; this interaction is probably mediated through direct binding to POLD2. In terms of processing, ubiquitinated, but not targeted to the proteasome. Sumoylated. Sumoylation by SUMO3 may be predominant. Post-translationally, phosphorylation at Ser-454 is thought to decrease the affinity for PCNA and Pol-delta4 processivity. May be phosphorylated by CDK1-cyclin-A complex, as well as CDK2-cyclin-A and CDK2-cyclin-E complexes. PCNA interferes with CDK-cyclin phosphorylation.

It localises to the cytoplasm. The protein localises to the nucleus. Its function is as follows. Accessory component of both the DNA polymerase delta complex and the DNA polymerase zeta complex. As a component of the trimeric and tetrameric DNA polymerase delta complexes (Pol-delta3 and Pol-delta4, respectively), plays a role in high fidelity genome replication, including in lagging strand synthesis, and repair. Required for optimal Pol-delta activity. Stabilizes the Pol-delta complex and plays a major role in Pol-delta stimulation by PCNA. Pol-delta3 and Pol-delta4 are characterized by the absence or the presence of POLD4. They exhibit differences in catalytic activity. Most notably, Pol-delta3 shows higher proofreading activity than Pol-delta4. Although both Pol-delta3 and Pol-delta4 process Okazaki fragments in vitro, Pol-delta3 may also be better suited to fulfill this task, exhibiting near-absence of strand displacement activity compared to Pol-delta4 and stalling on encounter with the 5'-blocking oligonucleotides. Pol-delta3 idling process may avoid the formation of a gap, while maintaining a nick that can be readily ligated. Along with DNA polymerase kappa, DNA polymerase delta carries out approximately half of nucleotide excision repair (NER) synthesis following UV irradiation. In this context, POLD3, along with PCNA and RFC1-replication factor C complex, is required to recruit POLD1, the catalytic subunit of the polymerase delta complex, to DNA damage sites. Under conditions of DNA replication stress, required for the repair of broken replication forks through break-induced replication (BIR). Involved in the translesion synthesis (TLS) of templates carrying O6-methylguanine or abasic sites performed by Pol-delta4, independently of DNA polymerase zeta (REV3L) or eta (POLH). Facilitates abasic site bypass by DNA polymerase delta by promoting extension from the nucleotide inserted opposite the lesion. Also involved in TLS, as a component of the tetrameric DNA polymerase zeta complex. Along with POLD2, dramatically increases the efficiency and processivity of DNA synthesis of the DNA polymerase zeta complex compared to the minimal zeta complex, consisting of only REV3L and REV7. In Mus musculus (Mouse), this protein is DNA polymerase delta subunit 3 (Pold3).